The primary structure comprises 433 residues: Enolase (433 aa).

(2R)-2-phosphoglycerate is bound at residue Gln-164. Glu-206 acts as the Proton donor in catalysis. Mg(2+)-binding residues include Asp-243, Glu-289, and Asp-316. Positions 341, 370, 371, and 392 each coordinate (2R)-2-phosphoglycerate. Lys-341 (proton acceptor) is an active-site residue.

Belongs to the enolase family. Mg(2+) serves as cofactor.

It is found in the cytoplasm. The protein localises to the secreted. Its subcellular location is the cell surface. It carries out the reaction (2R)-2-phosphoglycerate = phosphoenolpyruvate + H2O. Its pathway is carbohydrate degradation; glycolysis; pyruvate from D-glyceraldehyde 3-phosphate: step 4/5. Catalyzes the reversible conversion of 2-phosphoglycerate (2-PG) into phosphoenolpyruvate (PEP). It is essential for the degradation of carbohydrates via glycolysis. In Borreliella burgdorferi (strain ATCC 35210 / DSM 4680 / CIP 102532 / B31) (Borrelia burgdorferi), this protein is Enolase.